Consider the following 209-residue polypeptide: Virulence factors putative positive transcription regulator BvgA (209 aa).

A Response regulatory domain is found at 4–119 (KVLIIDDHPV…EVINAAKAVM (116 aa)). Asp54 is modified (4-aspartylphosphate). The 66-residue stretch at 142–207 (DSTLISVLSN…ELIDLAKRNN (66 aa)) folds into the HTH luxR-type domain. Positions 166–185 (NKDIADSMFLSNKTVSTYKT) form a DNA-binding region, H-T-H motif.

As to quaternary structure, homodimer. Phosphorylated by BvgS.

In terms of biological role, member of the two-component regulatory system BvgS/BvgA. Activates the transcription of virulence genes. The protein is Virulence factors putative positive transcription regulator BvgA (bvgA) of Bordetella bronchiseptica (strain ATCC BAA-588 / NCTC 13252 / RB50) (Alcaligenes bronchisepticus).